Reading from the N-terminus, the 296-residue chain is NAD kinase (296 aa).

The active-site Proton acceptor is the Asp-72. Residues 72-73, 146-147, Arg-157, Lys-174, Asp-176, 187-192, and Gln-247 contribute to the NAD(+) site; these read DG, ND, and TAYALS.

This sequence belongs to the NAD kinase family. It depends on a divalent metal cation as a cofactor.

It is found in the cytoplasm. The catalysed reaction is NAD(+) + ATP = ADP + NADP(+) + H(+). Its function is as follows. Involved in the regulation of the intracellular balance of NAD and NADP, and is a key enzyme in the biosynthesis of NADP. Catalyzes specifically the phosphorylation on 2'-hydroxyl of the adenosine moiety of NAD to yield NADP. This chain is NAD kinase, found in Pseudomonas putida (strain ATCC 700007 / DSM 6899 / JCM 31910 / BCRC 17059 / LMG 24140 / F1).